A 544-amino-acid chain; its full sequence is CTP synthase (544 aa).

Residues 1 to 265 (MTKFIFVTGG…DNIITEQLQL (265 aa)) form an amidoligase domain region. Serine 13 is a binding site for CTP. Serine 13 contacts UTP. Residues 14-19 (SLGKGI) and aspartate 71 contribute to the ATP site. Mg(2+)-binding residues include aspartate 71 and glutamate 139. CTP contacts are provided by residues 146–148 (DIE), 186–191 (KTKPTQ), and lysine 222. UTP-binding positions include 186 to 191 (KTKPTQ) and lysine 222. Residues 290–544 (KIAMVGKYVD…VKAALNNKKA (255 aa)) form the Glutamine amidotransferase type-1 domain. Glycine 353 contributes to the L-glutamine binding site. Catalysis depends on cysteine 380, which acts as the Nucleophile; for glutamine hydrolysis. L-glutamine-binding positions include 381 to 384 (LGMQ), glutamate 404, and arginine 471. Active-site residues include histidine 517 and glutamate 519.

This sequence belongs to the CTP synthase family. In terms of assembly, homotetramer.

It carries out the reaction UTP + L-glutamine + ATP + H2O = CTP + L-glutamate + ADP + phosphate + 2 H(+). The enzyme catalyses L-glutamine + H2O = L-glutamate + NH4(+). The catalysed reaction is UTP + NH4(+) + ATP = CTP + ADP + phosphate + 2 H(+). It functions in the pathway pyrimidine metabolism; CTP biosynthesis via de novo pathway; CTP from UDP: step 2/2. With respect to regulation, allosterically activated by GTP, when glutamine is the substrate; GTP has no effect on the reaction when ammonia is the substrate. The allosteric effector GTP functions by stabilizing the protein conformation that binds the tetrahedral intermediate(s) formed during glutamine hydrolysis. Inhibited by the product CTP, via allosteric rather than competitive inhibition. Functionally, catalyzes the ATP-dependent amination of UTP to CTP with either L-glutamine or ammonia as the source of nitrogen. Regulates intracellular CTP levels through interactions with the four ribonucleotide triphosphates. The protein is CTP synthase of Neisseria meningitidis serogroup A / serotype 4A (strain DSM 15465 / Z2491).